A 509-amino-acid polypeptide reads, in one-letter code: 2-isopropylmalate synthase (509 aa).

The Pyruvate carboxyltransferase domain occupies 5–267; sequence IQIFDTTLRD…QTALNLEETK (263 aa). Residues Asp-14, His-202, His-204, and Asn-238 each contribute to the Mn(2+) site. Positions 391–509 are regulatory domain; that stretch reads KLETLQLQYV…AAENVEKVGN (119 aa).

The protein belongs to the alpha-IPM synthase/homocitrate synthase family. LeuA type 1 subfamily. Homodimer. The cofactor is Mn(2+).

It is found in the cytoplasm. It catalyses the reaction 3-methyl-2-oxobutanoate + acetyl-CoA + H2O = (2S)-2-isopropylmalate + CoA + H(+). Its pathway is amino-acid biosynthesis; L-leucine biosynthesis; L-leucine from 3-methyl-2-oxobutanoate: step 1/4. In terms of biological role, catalyzes the condensation of the acetyl group of acetyl-CoA with 3-methyl-2-oxobutanoate (2-ketoisovalerate) to form 3-carboxy-3-hydroxy-4-methylpentanoate (2-isopropylmalate). The sequence is that of 2-isopropylmalate synthase from Staphylococcus aureus (strain MW2).